Here is a 71-residue protein sequence, read N- to C-terminus: UPF0337 protein RPA4418 (71 aa).

Positions 1-54 (MGSTMDKIKGQANELAGKAKQGIGEATGSDKLKGEGAIQEAKGHGQQALGNAKD) are disordered.

Belongs to the UPF0337 (CsbD) family.

The chain is UPF0337 protein RPA4418 from Rhodopseudomonas palustris (strain ATCC BAA-98 / CGA009).